We begin with the raw amino-acid sequence, 386 residues long: Cell division protein FtsZ (386 aa).

GTP-binding positions include 21 to 25, 108 to 110, glutamate 139, arginine 143, and asparagine 187; these read GGGGN and GTG.

Belongs to the FtsZ family. In terms of assembly, homodimer. Polymerizes to form a dynamic ring structure in a strictly GTP-dependent manner. Interacts directly with several other division proteins.

It localises to the cytoplasm. Essential cell division protein that forms a contractile ring structure (Z ring) at the future cell division site. The regulation of the ring assembly controls the timing and the location of cell division. One of the functions of the FtsZ ring is to recruit other cell division proteins to the septum to produce a new cell wall between the dividing cells. Binds GTP and shows GTPase activity. In Coxiella burnetii (strain RSA 493 / Nine Mile phase I), this protein is Cell division protein FtsZ.